The chain runs to 1002 residues: Eukaryotic translation initiation factor 5B (1002 aa).

Disordered regions lie at residues 1-172 (MAKK…GLAA) and 184-402 (EEQE…NKKD). Acidic residues predominate over residues 13 to 23 (WDEEFEEDAAQ). The span at 27–37 (ISATPTPNPES) shows a compositional bias: polar residues. Over residues 47-57 (EASASAEGAEA) the composition is skewed to low complexity. 2 stretches are compositionally biased toward basic and acidic residues: residues 75–111 (KKVI…EQAA) and 120–154 (QKEK…ESDK). Residues 155–172 (PSASAKKPAKKVPAGLAA) are compositionally biased toward low complexity. 2 stretches are compositionally biased toward basic and acidic residues: residues 184-252 (EEQE…ERRR) and 267-276 (AKKDGEENKP). Over residues 277-287 (KKVVYSKKKKR) the composition is skewed to basic residues. The segment covering 297 to 306 (IKSDSKKDSE) has biased composition (basic and acidic residues). Composition is skewed to acidic residues over residues 307–342 (VVPD…EETQ) and 352–370 (DQNQ…EEEE). Over residues 381–398 (STPAATPAATPTPSSASP) the composition is skewed to low complexity. One can recognise a tr-type G domain in the interval 403 to 621 (LRSPICCILG…LLELTQKRMS (219 aa)). Position 405 is a phosphoserine (S405). The segment at 412–419 (GHVDTGKT) is G1. D415 lines the K(+) pocket. D415 lines the Na(+) pocket. GTP-binding positions include 415-420 (DTGKTK), Q431, and 437-439 (GIT). T419 is a binding site for Mg(2+). G437 contributes to the K(+) binding site. A Na(+)-binding site is contributed by G437. The tract at residues 437–441 (GITQQ) is G2. T439 contributes to the Mg(2+) binding site. Residues 476-479 (DTPG) form a G3 region. GTP-binding positions include 530–533 (NKID) and 599–600 (AV). The G4 stretch occupies residues 530–533 (NKID). Residues 598-600 (SAV) are G5.

This sequence belongs to the TRAFAC class translation factor GTPase superfamily. Classic translation factor GTPase family. IF-2 subfamily. It depends on Na(+) as a cofactor. K(+) is required as a cofactor.

Its subcellular location is the cytoplasm. It carries out the reaction GTP + H2O = GDP + phosphate + H(+). Functionally, plays a role in translation initiation. Translational GTPase that catalyzes the joining of the 40S and 60S subunits to form the 80S initiation complex with the initiator methionine-tRNA in the P-site base paired to the start codon. GTP binding and hydrolysis induces conformational changes in the enzyme that renders it active for productive interactions with the ribosome. The release of the enzyme after formation of the initiation complex is a prerequisite to form elongation-competent ribosomes. Stimulates 20S pre-rRNA cleavage to mature 18S rRNA by PIN-domain endonuclease NOB1. This Saccharomyces cerevisiae (strain ATCC 204508 / S288c) (Baker's yeast) protein is Eukaryotic translation initiation factor 5B.